Consider the following 141-residue polypeptide: Large ribosomal subunit protein uL14 (141 aa).

It belongs to the universal ribosomal protein uL14 family. Part of the 50S ribosomal subunit. Forms a cluster with proteins L3 and L24e, part of which may contact the 16S rRNA in 2 intersubunit bridges.

Its function is as follows. Binds to 23S rRNA. Forms part of two intersubunit bridges in the 70S ribosome. The chain is Large ribosomal subunit protein uL14 from Pyrococcus horikoshii (strain ATCC 700860 / DSM 12428 / JCM 9974 / NBRC 100139 / OT-3).